Here is a 579-residue protein sequence, read N- to C-terminus: uncharacterized protein (579 aa).

The protein belongs to the UbiD family.

This is an uncharacterized protein from Chlamydia trachomatis serovar D (strain ATCC VR-885 / DSM 19411 / UW-3/Cx).